The sequence spans 326 residues: Virulence-associated V antigen (326 aa).

It localises to the secreted. In terms of biological role, possibly involved in calcium regulation of YOP expression, which includes the export process. The polypeptide is Virulence-associated V antigen (lcrV) (Yersinia pestis).